The primary structure comprises 423 residues: Gamma-glutamyl phosphate reductase (423 aa).

Belongs to the gamma-glutamyl phosphate reductase family.

The protein resides in the cytoplasm. The catalysed reaction is L-glutamate 5-semialdehyde + phosphate + NADP(+) = L-glutamyl 5-phosphate + NADPH + H(+). It functions in the pathway amino-acid biosynthesis; L-proline biosynthesis; L-glutamate 5-semialdehyde from L-glutamate: step 2/2. Catalyzes the NADPH-dependent reduction of L-glutamate 5-phosphate into L-glutamate 5-semialdehyde and phosphate. The product spontaneously undergoes cyclization to form 1-pyrroline-5-carboxylate. This Pseudomonas putida (strain ATCC 700007 / DSM 6899 / JCM 31910 / BCRC 17059 / LMG 24140 / F1) protein is Gamma-glutamyl phosphate reductase.